The following is a 366-amino-acid chain: Septin-1 (366 aa).

Residues 22–295 (KGFDFTLMVA…EGYRARCLQS (274 aa)) enclose the Septin-type G domain. Residues 32–39 (GESGLGKS) form a G1 motif region. GTP-binding positions include 32 to 39 (GESGLGKS), Thr66, Gly92, and 171 to 179 (KADALLPRE). The segment at 89-92 (DTPG) is G3 motif. Residues 170 to 173 (GKAD) form a G4 motif region. Ser206 is subject to Phosphoserine. 2 residues coordinate GTP: Gly229 and Arg244. Ser247 bears the Phosphoserine; by AURKB mark. Thr250 carries the phosphothreonine modification. 2 positions are modified to phosphoserine; by AURKB: Ser306 and Ser314. The segment at 347–366 (EKMQAQMQQSQAQGEQSDVL) is disordered. Residues 349–366 (MQAQMQQSQAQGEQSDVL) show a composition bias toward low complexity.

It belongs to the TRAFAC class TrmE-Era-EngA-EngB-Septin-like GTPase superfamily. Septin GTPase family. Septins polymerize into heterooligomeric protein complexes that form filaments, and can associate with cellular membranes, actin filaments and microtubules. GTPase activity is required for filament formation. Interacts with AURKB.

It localises to the cytoplasm. The protein localises to the cytoskeleton. The protein resides in the microtubule organizing center. It is found in the centrosome. Its subcellular location is the midbody. Functionally, filament-forming cytoskeletal GTPase. May play a role in cytokinesis (Potential). The polypeptide is Septin-1 (Rattus norvegicus (Rat)).